The following is a 354-amino-acid chain: Phospho-N-acetylmuramoyl-pentapeptide-transferase (354 aa).

The next 10 membrane-spanning stretches (helical) occupy residues 16–36, 66–86, 88–108, 130–150, 168–188, 193–213, 227–247, 257–277, 282–302, and 331–351; these read YITVRAGIAFFFAFFLTLYLM, TPTMGGVVFIFSALLASLLTV, IHNPYVLGGFLTILGFLAIGV, FFLQILVAFVVSLFLYEYAHL, IFGILFWTLVIVATSNAVNLT, GLATVPSIMALTTLAIITYIT, IIGVGEVSIIAAAFAGSLIGF, VFMGDSGSLTLGAFIGYMAII, VLLILIGFVFVMEALSVIIQV, and KIIVRFWIIALISNLIALITL.

Belongs to the glycosyltransferase 4 family. MraY subfamily. It depends on Mg(2+) as a cofactor.

Its subcellular location is the cell inner membrane. It catalyses the reaction UDP-N-acetyl-alpha-D-muramoyl-L-alanyl-gamma-D-glutamyl-meso-2,6-diaminopimeloyl-D-alanyl-D-alanine + di-trans,octa-cis-undecaprenyl phosphate = di-trans,octa-cis-undecaprenyl diphospho-N-acetyl-alpha-D-muramoyl-L-alanyl-D-glutamyl-meso-2,6-diaminopimeloyl-D-alanyl-D-alanine + UMP. The protein operates within cell wall biogenesis; peptidoglycan biosynthesis. In terms of biological role, catalyzes the initial step of the lipid cycle reactions in the biosynthesis of the cell wall peptidoglycan: transfers peptidoglycan precursor phospho-MurNAc-pentapeptide from UDP-MurNAc-pentapeptide onto the lipid carrier undecaprenyl phosphate, yielding undecaprenyl-pyrophosphoryl-MurNAc-pentapeptide, known as lipid I. This chain is Phospho-N-acetylmuramoyl-pentapeptide-transferase, found in Nitratiruptor sp. (strain SB155-2).